A 253-amino-acid polypeptide reads, in one-letter code: Molybdate import ATP-binding protein MolC (253 aa).

Positions 5–229 (LSVENLGFYY…NLTALFHLPM (225 aa)) constitute an ABC transporter domain. Residue 38-45 (GQNGCGKS) participates in ATP binding.

This sequence belongs to the ABC transporter superfamily. The complex is composed of two ATP-binding proteins (MolC), two transmembrane proteins (MolB) and a solute-binding protein (MolA).

It is found in the cell inner membrane. The enzyme catalyses molybdate(out) + ATP + H2O = molybdate(in) + ADP + phosphate + H(+). The MolBCA complex shows a decrease in affinity in the presence of increasing concentrations of substrate and nucleotide. Its function is as follows. Part of the ABC transporter complex MolBCA involved in molybdate import. Responsible for energy coupling to the transport system. Functions as a low-affinity molybdate transporter. This is Molybdate import ATP-binding protein MolC from Haemophilus influenzae (strain ATCC 51907 / DSM 11121 / KW20 / Rd).